A 408-amino-acid polypeptide reads, in one-letter code: Glyceraldehyde-3-phosphate dehydrogenase, testis-specific (408 aa).

The testis-specific N-terminal extension stretch occupies residues 1 to 73 (MSKRDIVLTN…TPPPKMVSVA (73 aa)). The segment at 19-68 (QPCPVTRAPPPPEPKAEVEPQPQPEPTPVREEIKPPPPPLPPHPATPPPK) is disordered. The segment covering 53 to 68 (PPPPPLPPHPATPPPK) has biased composition (pro residues). NAD(+)-binding positions include 85–86 (RI), Asp106, Lys151, Tyr173, and Ser193. D-glyceraldehyde 3-phosphate is bound by residues 223–225 (SCT), Thr254, 283–284 (TG), and Arg306. The Nucleophile role is filled by Cys224. Asn388 lines the NAD(+) pocket.

It belongs to the glyceraldehyde-3-phosphate dehydrogenase family. In terms of assembly, homotetramer. Interacts with ARRB2; the interaction is detected in the nucleus upon OR1D2 stimulation. Testis specific.

The protein localises to the cytoplasm. It catalyses the reaction D-glyceraldehyde 3-phosphate + phosphate + NAD(+) = (2R)-3-phospho-glyceroyl phosphate + NADH + H(+). Its pathway is carbohydrate degradation; glycolysis; pyruvate from D-glyceraldehyde 3-phosphate: step 1/5. May play an important role in regulating the switch between different pathways for energy production during spermiogenesis and in the spermatozoon. Required for sperm motility and male fertility. This chain is Glyceraldehyde-3-phosphate dehydrogenase, testis-specific (GAPDHS), found in Homo sapiens (Human).